A 423-amino-acid polypeptide reads, in one-letter code: GPI mannosyltransferase 2 (423 aa).

9 consecutive transmembrane segments (helical) span residues 11–31 (ILSL…IALG), 106–126 (WEAL…VLAL), 139–159 (LAYL…ISAP), 160–180 (YAES…AISL), 197–219 (GLSY…LFAV), 240–260 (LVAP…PQVL), 299–319 (YWTP…TILL), 351–371 (LAAI…VQII), and 400–420 (GVIV…ASFL).

Belongs to the PIGV family.

Its subcellular location is the endoplasmic reticulum membrane. It functions in the pathway glycolipid biosynthesis; glycosylphosphatidylinositol-anchor biosynthesis. In terms of biological role, mannosyltransferase involved in glycosylphosphatidylinositol-anchor biosynthesis. Transfers the second mannose to the glycosylphosphatidylinositol during GPI precursor assembly. The sequence is that of GPI mannosyltransferase 2 (GPI18) from Gibberella zeae (strain ATCC MYA-4620 / CBS 123657 / FGSC 9075 / NRRL 31084 / PH-1) (Wheat head blight fungus).